Reading from the N-terminus, the 530-residue chain is Vesicular acetylcholine transporter (530 aa).

Residues 1–33 are Cytoplasmic-facing; sequence MEPTAPTGQARAAATKLSEAVGAALQEPQRQRR. The helical transmembrane segment at 34 to 54 threads the bilayer; the sequence is LVLVIVCVALLLDNMLYMVIV. Topologically, residues 55 to 125 are lumenal, vesicle; that stretch reads PIVPDYIAHM…PTESEDVKIG (71 aa). Residues Asn89 and Asn96 are each glycosylated (N-linked (GlcNAc...) asparagine). The chain crosses the membrane as a helical span at residues 126 to 146; sequence VLFASKAILQLLVNPLSGPFI. Residues 147–152 are Cytoplasmic-facing; sequence DRMSYD. A helical membrane pass occupies residues 153–173; sequence VPLLIGLGVMFASTVMFAFAE. Residues 174–182 lie on the Lumenal, vesicle side of the membrane; the sequence is DYATFFAAR. Residues 183 to 203 traverse the membrane as a helical segment; it reads SLQGLGSAFADTSGIAMIADK. Residues 204-213 lie on the Cytoplasmic side of the membrane; sequence YPEEPERSRA. Residues 214 to 234 traverse the membrane as a helical segment; the sequence is LGVALAFISFGSLVAPPFGGI. Residues 235 to 242 are Lumenal, vesicle-facing; sequence LYEFAGKR. A helical membrane pass occupies residues 243–263; it reads VPFLVLAAVSLFDALLLLAVA. The Cytoplasmic portion of the chain corresponds to 264–288; that stretch reads KPFSAAARARANLPVGTPIHRLMLD. The chain crosses the membrane as a helical span at residues 289 to 309; the sequence is PYIAVVAGALTTCNIPLAFLE. The Lumenal, vesicle segment spans residues 310–325; that stretch reads PTIATWMKHTMAASEW. A helical transmembrane segment spans residues 326–346; that stretch reads EMGMVWLPAFVPHVLGVYLTV. The Cytoplasmic portion of the chain corresponds to 347–356; it reads RLAARYPHLQ. A helical membrane pass occupies residues 357–377; the sequence is WLYGALGLAVIGVSSCVVPAC. At 378 to 388 the chain is on the lumenal, vesicle side; sequence RSFAPLVVSLC. Residues 389–409 form a helical membrane-spanning segment; that stretch reads GLCFGIALVDTALLPTLAFLV. Topologically, residues 410 to 422 are cytoplasmic; it reads DVRHVSVYGSVYA. The chain crosses the membrane as a helical span at residues 423-443; the sequence is IADISYSVAYALGPIVAGHIV. Residues 444–447 lie on the Lumenal, vesicle side of the membrane; the sequence is HSLG. The helical transmembrane segment at 448-468 threads the bilayer; the sequence is FEQLSLGMGLANLLYAPVLLL. Over 469-530 the chain is Cytoplasmic; sequence LRNVGLLTRS…EDDYNYYSRS (62 aa). The tract at residues 471 to 530 is mediates interaction with SEC14L1; that stretch reads NVGLLTRSRSERDVLLDEPPQGLYDAVRLREVQGKDGGEPCSPPGPFDGCEDDYNYYSRS. Residues 504–530 are disordered; the sequence is GKDGGEPCSPPGPFDGCEDDYNYYSRS.

It belongs to the major facilitator superfamily. Vesicular transporter family. Interacts with SEC14L1. In terms of tissue distribution, expressed in the spinal cord, brain (excluding the cerebellum), brain stem and cholinergic tissues. Not expressed in peripheral tissues such as liver and kidney.

The protein localises to the cytoplasmic vesicle. It localises to the secretory vesicle. It is found in the synaptic vesicle membrane. The catalysed reaction is acetylcholine(out) + 2 H(+)(in) = acetylcholine(in) + 2 H(+)(out). The enzyme catalyses choline(in) + 2 H(+)(out) = choline(out) + 2 H(+)(in). It carries out the reaction serotonin(in) + 2 H(+)(out) = serotonin(out) + 2 H(+)(in). Its function is as follows. Electrogenic antiporter that exchanges one cholinergic neurotransmitter, acetylcholine or choline, with two intravesicular protons across the membrane of synaptic vesicles. Uses the electrochemical proton gradient established by the V-type proton-pump ATPase to store neurotransmitters inside the vesicles prior to their release via exocytosis. Determines cholinergic vesicular quantal size at presynaptic nerve terminals in developing neuro-muscular junctions with an impact on motor neuron differentiation and innervation pattern. Part of forebrain cholinergic system, regulates hippocampal synapse transmissions that underlie spatial memory formation. Can transport serotonin. This Mus musculus (Mouse) protein is Vesicular acetylcholine transporter (Slc18a3).